We begin with the raw amino-acid sequence, 206 residues long: Thiamine-phosphate synthase (206 aa).

Residues 36-40 (QLRMK) and Asn68 contribute to the 4-amino-2-methyl-5-(diphosphooxymethyl)pyrimidine site. Residues Asp69 and Asp88 each contribute to the Mg(2+) site. Residue Ser106 coordinates 4-amino-2-methyl-5-(diphosphooxymethyl)pyrimidine. 132-134 (TNT) contacts 2-[(2R,5Z)-2-carboxy-4-methylthiazol-5(2H)-ylidene]ethyl phosphate. Lys135 contacts 4-amino-2-methyl-5-(diphosphooxymethyl)pyrimidine. 2-[(2R,5Z)-2-carboxy-4-methylthiazol-5(2H)-ylidene]ethyl phosphate contacts are provided by residues Gly162 and 182–183 (VS).

Belongs to the thiamine-phosphate synthase family. Mg(2+) serves as cofactor.

The catalysed reaction is 2-[(2R,5Z)-2-carboxy-4-methylthiazol-5(2H)-ylidene]ethyl phosphate + 4-amino-2-methyl-5-(diphosphooxymethyl)pyrimidine + 2 H(+) = thiamine phosphate + CO2 + diphosphate. It carries out the reaction 2-(2-carboxy-4-methylthiazol-5-yl)ethyl phosphate + 4-amino-2-methyl-5-(diphosphooxymethyl)pyrimidine + 2 H(+) = thiamine phosphate + CO2 + diphosphate. It catalyses the reaction 4-methyl-5-(2-phosphooxyethyl)-thiazole + 4-amino-2-methyl-5-(diphosphooxymethyl)pyrimidine + H(+) = thiamine phosphate + diphosphate. Its pathway is cofactor biosynthesis; thiamine diphosphate biosynthesis; thiamine phosphate from 4-amino-2-methyl-5-diphosphomethylpyrimidine and 4-methyl-5-(2-phosphoethyl)-thiazole: step 1/1. Condenses 4-methyl-5-(beta-hydroxyethyl)thiazole monophosphate (THZ-P) and 2-methyl-4-amino-5-hydroxymethyl pyrimidine pyrophosphate (HMP-PP) to form thiamine monophosphate (TMP). The sequence is that of Thiamine-phosphate synthase from Methanococcus vannielii (strain ATCC 35089 / DSM 1224 / JCM 13029 / OCM 148 / SB).